A 511-amino-acid chain; its full sequence is Histidine ammonia-lyase (511 aa).

Residues 142 to 144 constitute a cross-link (5-imidazolinone (Ala-Gly)); it reads ASG. At Ser143 the chain carries 2,3-didehydroalanine (Ser).

This sequence belongs to the PAL/histidase family. Post-translationally, contains an active site 4-methylidene-imidazol-5-one (MIO), which is formed autocatalytically by cyclization and dehydration of residues Ala-Ser-Gly.

Its subcellular location is the cytoplasm. The catalysed reaction is L-histidine = trans-urocanate + NH4(+). Its pathway is amino-acid degradation; L-histidine degradation into L-glutamate; N-formimidoyl-L-glutamate from L-histidine: step 1/3. In Chelativorans sp. (strain BNC1), this protein is Histidine ammonia-lyase.